Consider the following 282-residue polypeptide: 4-diphosphocytidyl-2-C-methyl-D-erythritol kinase (282 aa).

Residue K13 is part of the active site. 96–106 (PMGGGIGGGSS) is a binding site for ATP. The active site involves D138.

The protein belongs to the GHMP kinase family. IspE subfamily.

It catalyses the reaction 4-CDP-2-C-methyl-D-erythritol + ATP = 4-CDP-2-C-methyl-D-erythritol 2-phosphate + ADP + H(+). The protein operates within isoprenoid biosynthesis; isopentenyl diphosphate biosynthesis via DXP pathway; isopentenyl diphosphate from 1-deoxy-D-xylulose 5-phosphate: step 3/6. Functionally, catalyzes the phosphorylation of the position 2 hydroxy group of 4-diphosphocytidyl-2C-methyl-D-erythritol. The polypeptide is 4-diphosphocytidyl-2-C-methyl-D-erythritol kinase (Pseudomonas syringae pv. tomato (strain ATCC BAA-871 / DC3000)).